Consider the following 870-residue polypeptide: Aminopeptidase N (870 aa).

Residues glutamate 121 and 261–265 (GAMEN) each bind substrate. Histidine 297 is a binding site for Zn(2+). The active-site Proton acceptor is glutamate 298. Zn(2+)-binding residues include histidine 301 and glutamate 320.

The protein belongs to the peptidase M1 family. Zn(2+) is required as a cofactor.

It is found in the cell inner membrane. The enzyme catalyses Release of an N-terminal amino acid, Xaa-|-Yaa- from a peptide, amide or arylamide. Xaa is preferably Ala, but may be most amino acids including Pro (slow action). When a terminal hydrophobic residue is followed by a prolyl residue, the two may be released as an intact Xaa-Pro dipeptide.. Its function is as follows. Aminopeptidase N is involved in the degradation of intracellular peptides generated by protein breakdown during normal growth as well as in response to nutrient starvation. The sequence is that of Aminopeptidase N (pepN) from Escherichia coli (strain K12).